The chain runs to 485 residues: uncharacterized protein (485 aa).

A run of 10 helical transmembrane segments spans residues 9-29 (IFISIFLGLAIIYTFPLLTHQ), 66-86 (PIIDASPLPLMLGIVILALAL), 98-118 (YITASLCFMMILANPFFIENL), 131-151 (VAISIISSYVAYQYKPINIII), 159-179 (FLSLYQAALNTYAIFLLAFII), 194-214 (NTASSVAGLIVGYFAYSYFIA), 259-279 (NYLIYYSLFFALIISLIVIVL), 293-313 (LLVVLILLASMFFIIGPMIFL), 322-342 (VLIGMGGFMFFCCLCVFYAFE), and 350-370 (IYFSFILLISTIFSYGAYNAI).

It is found in the host membrane. This is an uncharacterized protein from Salmonella typhimurium (Bacteriophage P22).